A 547-amino-acid polypeptide reads, in one-letter code: Threonylcarbamoyladenosine tRNA methylthiotransferase (547 aa).

Residues 30–51 are disordered; the sequence is ARKSVVPRARKHKQETGEQMQT. The MTTase N-terminal domain occupies 59–167; sequence QKVWLKTWGC…VVEVVDEAIK (109 aa). C68, C104, C133, C209, C213, and C216 together coordinate [4Fe-4S] cluster. Residues 195–426 form the Radical SAM core domain; it reads RKNPLIEIIS…ALFHSYRPYD (232 aa). The TRAM domain maps to 426–488; the sequence is DHKMGEQQQV…KHYMKGRPLE (63 aa). A helical membrane pass occupies residues 527–547; it reads ILAVVLLLSAVLLALLMEKLL.

It belongs to the methylthiotransferase family. CDKAL1 subfamily. It depends on [4Fe-4S] cluster as a cofactor.

The protein localises to the endoplasmic reticulum membrane. It catalyses the reaction N(6)-L-threonylcarbamoyladenosine(37) in tRNA + (sulfur carrier)-SH + AH2 + 2 S-adenosyl-L-methionine = 2-methylsulfanyl-N(6)-L-threonylcarbamoyladenosine(37) in tRNA + (sulfur carrier)-H + 5'-deoxyadenosine + L-methionine + A + S-adenosyl-L-homocysteine + 2 H(+). Functionally, catalyzes the methylthiolation of N6-threonylcarbamoyladenosine (t(6)A), leading to the formation of 2-methylthio-N6-threonylcarbamoyladenosine (ms(2)t(6)A) at position 37 in tRNAs that read codons beginning with adenine. The protein is Threonylcarbamoyladenosine tRNA methylthiotransferase (cdkal1) of Danio rerio (Zebrafish).